The following is a 3183-amino-acid chain: WD repeat- and FYVE domain-containing protein 4 (3183 aa).

The span at 1-15 (MEAEDLSKTEDRPED) shows a compositional bias: basic and acidic residues. Disordered stretches follow at residues 1 to 37 (MEAE…EGQS), 790 to 811 (AGQE…GKFK), 938 to 977 (KSLH…QALR), and 1828 to 1852 (KETT…HAAE). Over residues 1832–1852 (SESSRNTSSPGASAEASHAAE) the composition is skewed to low complexity. The 126-residue stretch at 2383 to 2508 (LDGEKVSQKV…DRSKALKSFS (126 aa)) folds into the BEACH-type PH domain. In terms of domain architecture, BEACH spans 2525-2819 (NLRKHPGFDR…QIFTKPHPSR (295 aa)). The segment at 2812–2836 (FTKPHPSRNTTGKNPGPGKDASTPV) is disordered. WD repeat units lie at residues 2930–2969 (LAAW…GRPR), 2979–3018 (GHTQ…RVAC), 3021–3060 (VHRE…ASIT), 3070–3108 (TCCC…MPVP), and 3150–3183 (KASP…SADG).

In terms of assembly, interacts with HSP90AB1. In terms of tissue distribution, highly expressed in immune tissues, especially B lymphocytes.

The protein resides in the early endosome. The protein localises to the endoplasmic reticulum. In terms of biological role, plays a critical role in the regulation of cDC1-mediated cross-presentation of viral and tumor antigens in dendritic cells. Mechanistically, acts near the plasma membrane and interacts with endosomal membranes to promote endosomal-to-cytosol antigen trafficking. Also plays a role in B-cell survival through regulation of autophagy. The polypeptide is WD repeat- and FYVE domain-containing protein 4 (Mus musculus (Mouse)).